The following is a 257-amino-acid chain: MGRVIRAQRKGAGSVFVSHTKKRKGAPKLRSLDYAERHGYIKGVVKDIIHDPGRGAPLAVVHFRDPYKFKTRKELFIAPEGLYTGQFVYCGKKATLEVGNVMPVGAMPEGTIVCNLEEKMGDRGRLARASGNFATVIGHNPDAKRTRVKLPSGAKKVLPSSNRGMVGIVAGGGRIDKPILKAGRAYHKYKVKRNCWPYVRGVAMNPVEHPHGGGNHQHIGKASTVKRGTSAGRKVGLIAARRTGRIRGGKTDTKKET.

The interval 210–231 is disordered; that stretch reads PHGGGNHQHIGKASTVKRGTSA.

This sequence belongs to the universal ribosomal protein uL2 family.

The protein localises to the cytoplasm. This Mamestra brassicae (Cabbage moth) protein is Large ribosomal subunit protein uL2 (RpL8).